We begin with the raw amino-acid sequence, 573 residues long: Probable CoA ligase CCL13 (573 aa).

ATP contacts are provided by residues 216 to 224 (TSGTTARPK), 352 to 357 (HIYGLT), Asp-449, 461 to 464 (LKDR), and Lys-556. An SBD1 region spans residues 284 to 352 (SPKAIFDNIH…MEEMGFQVNH (69 aa)). The interval 353-429 (IYGLTETHGP…FRGNTVMSGY (77 aa)) is SBD2.

It belongs to the ATP-dependent AMP-binding enzyme family.

The protein localises to the cytoplasm. It is found in the cytosol. The polypeptide is Probable CoA ligase CCL13 (Humulus lupulus (European hop)).